Reading from the N-terminus, the 166-residue chain is NAD(P)H-quinone oxidoreductase subunit I, chloroplastic (166 aa).

4Fe-4S ferredoxin-type domains lie at 55 to 84 and 95 to 124; these read GRIH…VDWK and LNYS…MTEE. Residues C64, C67, C70, C74, C104, C107, C110, and C114 each contribute to the [4Fe-4S] cluster site.

Belongs to the complex I 23 kDa subunit family. As to quaternary structure, NDH is composed of at least 16 different subunits, 5 of which are encoded in the nucleus. The cofactor is [4Fe-4S] cluster.

It is found in the plastid. Its subcellular location is the chloroplast thylakoid membrane. It carries out the reaction a plastoquinone + NADH + (n+1) H(+)(in) = a plastoquinol + NAD(+) + n H(+)(out). The catalysed reaction is a plastoquinone + NADPH + (n+1) H(+)(in) = a plastoquinol + NADP(+) + n H(+)(out). NDH shuttles electrons from NAD(P)H:plastoquinone, via FMN and iron-sulfur (Fe-S) centers, to quinones in the photosynthetic chain and possibly in a chloroplast respiratory chain. The immediate electron acceptor for the enzyme in this species is believed to be plastoquinone. Couples the redox reaction to proton translocation, and thus conserves the redox energy in a proton gradient. The protein is NAD(P)H-quinone oxidoreductase subunit I, chloroplastic of Chaetymenia peduncularis (Daisy).